Here is a 349-residue protein sequence, read N- to C-terminus: DNA polymerase IV (349 aa).

Residues 7–188 (IIHIDMDYFF…LPVKKLFGVG (182 aa)) form the UmuC domain. Residues D11 and D106 each contribute to the Mg(2+) site. E107 is an active-site residue.

It belongs to the DNA polymerase type-Y family. As to quaternary structure, monomer. Mg(2+) is required as a cofactor.

It localises to the cytoplasm. The catalysed reaction is DNA(n) + a 2'-deoxyribonucleoside 5'-triphosphate = DNA(n+1) + diphosphate. Poorly processive, error-prone DNA polymerase involved in untargeted mutagenesis. Copies undamaged DNA at stalled replication forks, which arise in vivo from mismatched or misaligned primer ends. These misaligned primers can be extended by PolIV. Exhibits no 3'-5' exonuclease (proofreading) activity. May be involved in translesional synthesis, in conjunction with the beta clamp from PolIII. The chain is DNA polymerase IV from Francisella tularensis subsp. novicida (strain U112).